The chain runs to 108 residues: uncharacterized protein (108 aa).

Residues 59–81 form a helical membrane-spanning segment; that stretch reads NIVIILWKIMVVIISSIIHRTYI.

The protein resides in the membrane. This is an uncharacterized protein from Rickettsia conorii (strain ATCC VR-613 / Malish 7).